The chain runs to 312 residues: Ribosomal RNA small subunit methyltransferase H (312 aa).

S-adenosyl-L-methionine is bound by residues A32–H34, D52, F79, D100, and Q107.

Belongs to the methyltransferase superfamily. RsmH family.

It localises to the cytoplasm. It carries out the reaction cytidine(1402) in 16S rRNA + S-adenosyl-L-methionine = N(4)-methylcytidine(1402) in 16S rRNA + S-adenosyl-L-homocysteine + H(+). Functionally, specifically methylates the N4 position of cytidine in position 1402 (C1402) of 16S rRNA. This Listeria monocytogenes serovar 1/2a (strain ATCC BAA-679 / EGD-e) protein is Ribosomal RNA small subunit methyltransferase H.